The following is a 139-amino-acid chain: D-ribose pyranase (139 aa).

The Proton donor role is filled by histidine 20. Residues aspartate 28, histidine 106, and 128 to 130 each bind substrate; that span reads YAN.

Belongs to the RbsD / FucU family. RbsD subfamily. As to quaternary structure, homodecamer.

It is found in the cytoplasm. The enzyme catalyses beta-D-ribopyranose = beta-D-ribofuranose. It functions in the pathway carbohydrate metabolism; D-ribose degradation; D-ribose 5-phosphate from beta-D-ribopyranose: step 1/2. In terms of biological role, catalyzes the interconversion of beta-pyran and beta-furan forms of D-ribose. In Escherichia coli O139:H28 (strain E24377A / ETEC), this protein is D-ribose pyranase.